Consider the following 251-residue polypeptide: MLAKRIIPCLDVRDGRVVKGINFEGLRDAGSILEQARFYNNELADELVFLDISASLESRRTTLEEVMKVSEEVFIPLTVGGGISSVERAREVFLHGADKVSVNTAAVNDPYLISRIAEKYGSQAVVVAIDIKKVGNHYMVHTHSGKQITQYEALEWALKVQELGAGEILLTSMDRDGTKEGYENNSLRMISTAVHIPVIASGGAGNLEHLYDGFSKGCADAALAASIFHFRHYSIRQAKEYLHKRGVAVRF.

Active-site residues include aspartate 11 and aspartate 130.

The protein belongs to the HisA/HisF family. In terms of assembly, heterodimer of HisH and HisF.

It is found in the cytoplasm. It carries out the reaction 5-[(5-phospho-1-deoxy-D-ribulos-1-ylimino)methylamino]-1-(5-phospho-beta-D-ribosyl)imidazole-4-carboxamide + L-glutamine = D-erythro-1-(imidazol-4-yl)glycerol 3-phosphate + 5-amino-1-(5-phospho-beta-D-ribosyl)imidazole-4-carboxamide + L-glutamate + H(+). It functions in the pathway amino-acid biosynthesis; L-histidine biosynthesis; L-histidine from 5-phospho-alpha-D-ribose 1-diphosphate: step 5/9. IGPS catalyzes the conversion of PRFAR and glutamine to IGP, AICAR and glutamate. The HisF subunit catalyzes the cyclization activity that produces IGP and AICAR from PRFAR using the ammonia provided by the HisH subunit. The polypeptide is Imidazole glycerol phosphate synthase subunit HisF (Chlorobium chlorochromatii (strain CaD3)).